The following is a 316-amino-acid chain: Annexin A13 (316 aa).

Gly2 is lipidated: N-myristoyl glycine. Annexin repeat units lie at residues 14-85, 86-157, 169-241, and 245-316; these read FDVD…ALLD, RPSE…SLLQ, DLAG…TLVR, and DQEG…ALLH.

This sequence belongs to the annexin family. As to quaternary structure, monomer and homodimer. As to expression, detected in intestine, and at much lower levels also in kidney (at protein level).

It localises to the apical cell membrane. The protein resides in the cell membrane. It is found in the cytoplasmic vesicle. In terms of biological role, binds to membranes enriched in phosphatidylserine or phosphatidylglycerol in a calcium-dependent manner. Half-maximal membrane binding requires about 60 uM calcium. Does not bind to membranes that lack phospholipids with an acidic headgroup. Its function is as follows. Binds to membranes enriched in phosphatidylserine or phosphatidylglycerol in a calcium-dependent manner, but requires higher calcium levels for membrane binding than isoform A. Half-maximal membrane binding requires about 320 uM calcium. May play a role in vesicular traffic to the apical plasma membrane. The sequence is that of Annexin A13 (ANXA13) from Canis lupus familiaris (Dog).